The sequence spans 262 residues: Phosphatidylglycerol--prolipoprotein diacylglyceryl transferase (262 aa).

A run of 4 helical transmembrane segments spans residues 17 to 37, 57 to 77, 95 to 115, and 119 to 139; these read LAIHWYGLMYLIGFALVYALG, LIFYSVLGVVLGGRLGYVLFY, GGMSFHGGLIGVIVVMLLFAH, and LGFFTVSDFIAPLIPLGLAAG. Residue Arg-140 coordinates a 1,2-diacyl-sn-glycero-3-phospho-(1'-sn-glycerol). A run of 3 helical transmembrane segments spans residues 173–193, 200–220, and 227–247; these read PSQLYELGLEGIVLFALLWWY, AGQVSAMFLMGYGAFRFLVEF, and FLGLLAAGLSMGQWLSIPMVL.

Belongs to the Lgt family.

It localises to the cell inner membrane. The enzyme catalyses L-cysteinyl-[prolipoprotein] + a 1,2-diacyl-sn-glycero-3-phospho-(1'-sn-glycerol) = an S-1,2-diacyl-sn-glyceryl-L-cysteinyl-[prolipoprotein] + sn-glycerol 1-phosphate + H(+). The protein operates within protein modification; lipoprotein biosynthesis (diacylglyceryl transfer). Catalyzes the transfer of the diacylglyceryl group from phosphatidylglycerol to the sulfhydryl group of the N-terminal cysteine of a prolipoprotein, the first step in the formation of mature lipoproteins. This chain is Phosphatidylglycerol--prolipoprotein diacylglyceryl transferase, found in Bordetella bronchiseptica (strain ATCC BAA-588 / NCTC 13252 / RB50) (Alcaligenes bronchisepticus).